A 157-amino-acid polypeptide reads, in one-letter code: 6,7-dimethyl-8-ribityllumazine synthase (157 aa).

Residues Phe22, Ala57 to Glu59, and Thr81 to Ile83 contribute to the 5-amino-6-(D-ribitylamino)uracil site. Gly86–Thr87 lines the (2S)-2-hydroxy-3-oxobutyl phosphate pocket. His89 serves as the catalytic Proton donor. Residue Phe114 coordinates 5-amino-6-(D-ribitylamino)uracil. Arg128 provides a ligand contact to (2S)-2-hydroxy-3-oxobutyl phosphate.

It belongs to the DMRL synthase family. Forms an icosahedral capsid composed of 60 subunits, arranged as a dodecamer of pentamers.

It catalyses the reaction (2S)-2-hydroxy-3-oxobutyl phosphate + 5-amino-6-(D-ribitylamino)uracil = 6,7-dimethyl-8-(1-D-ribityl)lumazine + phosphate + 2 H2O + H(+). Its pathway is cofactor biosynthesis; riboflavin biosynthesis; riboflavin from 2-hydroxy-3-oxobutyl phosphate and 5-amino-6-(D-ribitylamino)uracil: step 1/2. Functionally, catalyzes the formation of 6,7-dimethyl-8-ribityllumazine by condensation of 5-amino-6-(D-ribitylamino)uracil with 3,4-dihydroxy-2-butanone 4-phosphate. This is the penultimate step in the biosynthesis of riboflavin. The chain is 6,7-dimethyl-8-ribityllumazine synthase from Haemophilus influenzae (strain ATCC 51907 / DSM 11121 / KW20 / Rd).